The sequence spans 203 residues: Small ribosomal subunit protein uS4 (203 aa).

An S4 RNA-binding domain is found at 93–156; that stretch reads QRLDNVVFRL…MKVPAILEAV (64 aa).

The protein belongs to the universal ribosomal protein uS4 family. Part of the 30S ribosomal subunit. Contacts protein S5. The interaction surface between S4 and S5 is involved in control of translational fidelity.

In terms of biological role, one of the primary rRNA binding proteins, it binds directly to 16S rRNA where it nucleates assembly of the body of the 30S subunit. With S5 and S12 plays an important role in translational accuracy. The sequence is that of Small ribosomal subunit protein uS4 from Lactococcus lactis subsp. lactis (strain IL1403) (Streptococcus lactis).